We begin with the raw amino-acid sequence, 421 residues long: Enolase (421 aa).

Glutamine 162 serves as a coordination point for (2R)-2-phosphoglycerate. Catalysis depends on glutamate 204, which acts as the Proton donor. Mg(2+)-binding residues include aspartate 241, glutamate 284, and aspartate 311. (2R)-2-phosphoglycerate contacts are provided by lysine 336, arginine 365, serine 366, and lysine 387. Lysine 336 serves as the catalytic Proton acceptor.

Belongs to the enolase family. Requires Mg(2+) as cofactor.

Its subcellular location is the cytoplasm. It localises to the secreted. It is found in the cell surface. It catalyses the reaction (2R)-2-phosphoglycerate = phosphoenolpyruvate + H2O. It functions in the pathway carbohydrate degradation; glycolysis; pyruvate from D-glyceraldehyde 3-phosphate: step 4/5. In terms of biological role, catalyzes the reversible conversion of 2-phosphoglycerate (2-PG) into phosphoenolpyruvate (PEP). It is essential for the degradation of carbohydrates via glycolysis. The chain is Enolase from Nautilia profundicola (strain ATCC BAA-1463 / DSM 18972 / AmH).